Reading from the N-terminus, the 865-residue chain is Probable beta-glucosidase J (865 aa).

Asp233 is an active-site residue. Residues Asn330, Asn447, Asn503, and Asn764 are each glycosylated (N-linked (GlcNAc...) asparagine). One can recognise a PA14 domain in the interval 411 to 579; sequence TGQPGYTFRV…DTDTAIQQAV (169 aa).

This sequence belongs to the glycosyl hydrolase 3 family.

It localises to the secreted. The enzyme catalyses Hydrolysis of terminal, non-reducing beta-D-glucosyl residues with release of beta-D-glucose.. Its pathway is glycan metabolism; cellulose degradation. Beta-glucosidases are one of a number of cellulolytic enzymes involved in the degradation of cellulosic biomass. Catalyzes the last step releasing glucose from the inhibitory cellobiose. The polypeptide is Probable beta-glucosidase J (bglJ) (Aspergillus fumigatus (strain ATCC MYA-4609 / CBS 101355 / FGSC A1100 / Af293) (Neosartorya fumigata)).